The following is a 261-amino-acid chain: Proteasome subunit alpha (261 aa).

The segment at 242 to 261 is disordered; sequence NEENKKEEENREETKEKQEE.

Belongs to the peptidase T1A family. As to quaternary structure, the 20S proteasome core is composed of 14 alpha and 14 beta subunits that assemble into four stacked heptameric rings, resulting in a barrel-shaped structure. The two inner rings, each composed of seven catalytic beta subunits, are sandwiched by two outer rings, each composed of seven alpha subunits. The catalytic chamber with the active sites is on the inside of the barrel. Has a gated structure, the ends of the cylinder being occluded by the N-termini of the alpha-subunits. Is capped at one or both ends by the proteasome regulatory ATPase, PAN.

It is found in the cytoplasm. With respect to regulation, the formation of the proteasomal ATPase PAN-20S proteasome complex, via the docking of the C-termini of PAN into the intersubunit pockets in the alpha-rings, triggers opening of the gate for substrate entry. Interconversion between the open-gate and close-gate conformations leads to a dynamic regulation of the 20S proteasome proteolysis activity. Component of the proteasome core, a large protease complex with broad specificity involved in protein degradation. The M.jannaschii proteasome is able to cleave oligopeptides after Glu, Asp, Tyr, Phe, Trp, slightly after Arg, but not after Ala. Thus, displays caspase-like and chymotrypsin-like activities and low level of trypsin-like activity. In Methanocaldococcus jannaschii (strain ATCC 43067 / DSM 2661 / JAL-1 / JCM 10045 / NBRC 100440) (Methanococcus jannaschii), this protein is Proteasome subunit alpha.